We begin with the raw amino-acid sequence, 260 residues long: Thiazole synthase (260 aa).

The active-site Schiff-base intermediate with DXP is Lys102. Residues Gly163, 189 to 190 (AG), and 211 to 212 (NT) contribute to the 1-deoxy-D-xylulose 5-phosphate site.

Belongs to the ThiG family. As to quaternary structure, homotetramer. Forms heterodimers with either ThiH or ThiS.

Its subcellular location is the cytoplasm. It catalyses the reaction [ThiS sulfur-carrier protein]-C-terminal-Gly-aminoethanethioate + 2-iminoacetate + 1-deoxy-D-xylulose 5-phosphate = [ThiS sulfur-carrier protein]-C-terminal Gly-Gly + 2-[(2R,5Z)-2-carboxy-4-methylthiazol-5(2H)-ylidene]ethyl phosphate + 2 H2O + H(+). It functions in the pathway cofactor biosynthesis; thiamine diphosphate biosynthesis. Its function is as follows. Catalyzes the rearrangement of 1-deoxy-D-xylulose 5-phosphate (DXP) to produce the thiazole phosphate moiety of thiamine. Sulfur is provided by the thiocarboxylate moiety of the carrier protein ThiS. In vitro, sulfur can be provided by H(2)S. The chain is Thiazole synthase from Geotalea uraniireducens (strain Rf4) (Geobacter uraniireducens).